We begin with the raw amino-acid sequence, 865 residues long: Fanconi-associated nuclease 1 homolog (865 aa).

The UBZ4-type zinc-finger motif lies at 35–62 (GKICPLCETKFSLASYKSHMNTCNVADD). Positions 38, 41, 53, and 57 each coordinate Zn(2+). 2 disordered regions span residues 90-140 (DASF…SLDV) and 162-187 (RRSSRLLQNSQKDQADNANKEDPVKK). 2 stretches are compositionally biased toward basic and acidic residues: residues 93–112 (FSDKSENPTKRRKTDEREVP) and 174–187 (DQADNANKEDPVKK). Mn(2+) is bound by residues E682, D810, E825, and V826. The VRR-NUC domain occupies 744–857 (QELIEENIRK…GIRAEVCHVA (114 aa)).

It belongs to the FAN1 family. The cofactor is Mn(2+). It depends on Mg(2+) as a cofactor.

The protein localises to the nucleus. The catalysed reaction is Hydrolytically removes 5'-nucleotides successively from the 3'-hydroxy termini of 3'-hydroxy-terminated oligonucleotides.. Its function is as follows. Nuclease required for the repair of DNA interstrand cross-links (ICL). Acts as a 5'-3' exonuclease that anchors at a cut end of DNA and cleaves DNA successively at every third nucleotide, allowing to excise an ICL from one strand through flanking incisions. This is Fanconi-associated nuclease 1 homolog (fan-1) from Caenorhabditis elegans.